A 97-amino-acid polypeptide reads, in one-letter code: Coiled-coil domain-containing protein 167 (97 aa).

The stretch at 10–79 forms a coiled coil; the sequence is GVALEIDGLE…LRQENRKNML (70 aa). Residues 77–97 traverse the membrane as a helical segment; it reads NMLLSVAIFLLLTVIYAYWAL.

It localises to the membrane. The polypeptide is Coiled-coil domain-containing protein 167 (CCDC167) (Bos taurus (Bovine)).